The primary structure comprises 1977 residues: Voltage-dependent L-type calcium channel subunit alpha-1F (1977 aa).

The span at 1-11 shows a compositional bias: basic and acidic residues; sequence MSESEGGKDTT. A disordered region spans residues 1–60; that stretch reads MSESEGGKDTTPEPSPANGAGPGPEWGLCPGPPAVEGESSGASGLGTPKRRNQHSKHKTV. Over 1–92 the chain is Cytoplasmic; it reads MSESEGGKDT…RSCISIVEWK (92 aa). Residues 48–59 are compositionally biased toward basic residues; it reads PKRRNQHSKHKT. One copy of the I repeat lies at 79–375; the sequence is NPLRRSCISI…LVLGVLSGEF (297 aa). A helical transmembrane segment spans residues 93-111; sequence PFDILILLTIFANCVALGV. Residues 112 to 129 are Extracellular-facing; that stretch reads YIPFPEDDSNTANHNLEQ. A helical membrane pass occupies residues 130–149; the sequence is VEYVFLVIFTVETVLKIVAY. Over 150 to 161 the chain is Cytoplasmic; the sequence is GLVLHPSAYIRN. Residues 162 to 180 traverse the membrane as a helical segment; that stretch reads GWNLLDFIIVVVGLFSVLL. The Extracellular segment spans residues 181-201; sequence EQGPGRPGDAPHTGGKPGGFD. The helical transmembrane segment at 202–220 threads the bilayer; sequence VKALRAFRVLRPLRLVSGV. Residues 221 to 239 are Cytoplasmic-facing; that stretch reads PSLHIVLNSIMKALVPLLH. A helical transmembrane segment spans residues 240–259; the sequence is IALLVLFVIIIYAIIGLELF. Residues 260–347 are Extracellular-facing; sequence LGRMHKTCYF…WMQDAMGYEL (88 aa). N-linked (GlcNAc...) asparagine glycosylation occurs at Asn-295. A Ca(2+)-binding site is contributed by Glu-330. The helical transmembrane segment at 348–372 threads the bilayer; sequence PWVYFVSLVIFGSFFVLNLVLGVLS. The Cytoplasmic portion of the chain corresponds to 373–529; it reads GEFSKEREKA…ARCRRAVKSN (157 aa). A binding to the beta subunit region spans residues 395–412; the sequence is QQMEEDLRGYLDWITQAE. Disordered stretches follow at residues 418–441 and 455–488; these read DPSA…PQLA and SHST…EDEE. Residues 455–469 show a composition bias toward low complexity; that stretch reads SHSTRSTHSTSSHAS. Residues 515 to 761 form an II repeat; it reads NRVLRARCRR…VFLAIAVDNL (247 aa). The chain crosses the membrane as a helical span at residues 530–549; sequence ACYWAVLLLVFLNTLTIASE. Topologically, residues 550–564 are extracellular; sequence HHGQPVWLTQIQEYA. Residues 565–583 traverse the membrane as a helical segment; the sequence is NKVLLCLFTVEMLLKLYGL. Over 584-591 the chain is Cytoplasmic; that stretch reads GPSAYVSS. A helical transmembrane segment spans residues 592–610; that stretch reads FFNRFDCFVVCGGILETTL. The Extracellular portion of the chain corresponds to 611–620; sequence VEVGAMQPLG. The chain crosses the membrane as a helical span at residues 621-639; the sequence is ISVLRCVRLLRIFKVTRHW. The Cytoplasmic segment spans residues 640 to 658; sequence ASLSNLVASLLNSMKSIAS. A helical membrane pass occupies residues 659–679; it reads LLLLLFLFIIIFSLLGMQLFG. At 680 to 733 the chain is on the extracellular side; sequence GKFNFDQTHTKRSTFDTFPQALLTVFQILTGEDWNVVMYDGIMAYGGPFFPGML. Position 711 (Glu-711) interacts with Ca(2+). Residues 734 to 758 traverse the membrane as a helical segment; sequence VCIYFIILFICGNYILLNVFLAIAV. Over 759–871 the chain is Cytoplasmic; that stretch reads DNLASGDAGT…KGCHTLIHHH (113 aa). Positions 767-830 are disordered; it reads GTAKDKGGEK…EEEEEGAGGV (64 aa). Residues 768-783 are compositionally biased toward basic and acidic residues; it reads TAKDKGGEKSNEKDLP. A compositionally biased stretch (acidic residues) spans 807-826; the sequence is DMEEEEEEEEEEEEEEEEEG. One copy of the III repeat lies at 858 to 1140; the sequence is NPLRKGCHTL…IFVGFVIITF (283 aa). A helical transmembrane segment spans residues 872 to 890; the sequence is VFTNLILVFIILSSVSLAA. The Extracellular portion of the chain corresponds to 891–906; that stretch reads EDPIRAHSFRNHILGY. Residues 907-926 traverse the membrane as a helical segment; that stretch reads FDYAFTSIFTVEILLKMTVF. Residues 927 to 938 lie on the Cytoplasmic side of the membrane; it reads GAFLHRGSFCRS. The helical transmembrane segment at 939-957 threads the bilayer; it reads WFNMLDLLVVSVSLISFGI. At 958 to 963 the chain is on the extracellular side; sequence HSSAIS. Residues 964–983 form a helical membrane-spanning segment; that stretch reads VVKILRVLRVLRPLRAINRA. Residues 984–1002 lie on the Cytoplasmic side of the membrane; sequence KGLKHVVQCVFVAIRTIGN. The helical transmembrane segment at 1003–1022 threads the bilayer; the sequence is IMIVTTLLQFMFACIGVQLF. Residues 1023 to 1112 are Extracellular-facing; that stretch reads KGKFYTCTDE…HGPIYNYRVE (90 aa). Residues 1060 to 1150 are dihydropyridine binding; the sequence is RLWVNSDFNF…RAQGEQEYQN (91 aa). Glu-1086 contacts Ca(2+). The helical transmembrane segment at 1113-1133 threads the bilayer; it reads ISVFFIVYIIIIAFFMMNIFV. Over 1134 to 1190 the chain is Cytoplasmic; the sequence is GFVIITFRAQGEQEYQNCELDKNQRQCVEYALKAQPLRRYIPKNPHQYRVWATVNSA. The stretch at 1177 to 1444 is one IV repeat; sequence NPHQYRVWAT…LFVAVIMDNF (268 aa). The chain crosses the membrane as a helical span at residues 1191–1209; sequence AFEYLMFLLILLNTVALAM. Over 1210 to 1224 the chain is Extracellular; sequence QHYEQTAPFNYAMDI. The chain crosses the membrane as a helical span at residues 1225 to 1244; sequence LNMVFTGLFTIEMVLKIIAF. The Cytoplasmic segment spans residues 1245-1251; that stretch reads KPKHYFT. A helical transmembrane segment spans residues 1252 to 1273; the sequence is DAWNTFDALIVVGSIVDIAVTE. The Extracellular portion of the chain corresponds to 1274–1290; it reads VNNGGHLGESSEDSSRI. The helical transmembrane segment at 1291-1310 threads the bilayer; the sequence is SITFFRLFRVMRLVKLLSKG. The Cytoplasmic portion of the chain corresponds to 1311–1329; that stretch reads EGIRTLLWTFIKSFQALPY. The helical transmembrane segment at 1330 to 1349 threads the bilayer; that stretch reads VALLIAMIFFIYAVIGMQMF. The Extracellular segment spans residues 1350-1416; it reads GKVALQDGTQ…GEEFTCGSNF (67 aa). The interval 1397 to 1463 is dihydropyridine binding; the sequence is RCDPESDFGP…LGPHHLDEFK (67 aa). The phenylalkylamine binding stretch occupies residues 1409-1452; it reads EFTCGSNFAIAYFISFFMLCAFLIINLFVAVIMDNFDYLTRDWS. A helical membrane pass occupies residues 1417 to 1441; that stretch reads AIAYFISFFMLCAFLIINLFVAVIM. Topologically, residues 1442-1977 are cytoplasmic; that stretch reads DNFDYLTRDW…GDEMACVHAL (536 aa). Disordered regions lie at residues 1637 to 1754 and 1816 to 1841; these read CDTE…EVPD and DLPI…WATP. Residues 1638 to 1657 are compositionally biased toward acidic residues; the sequence is DTEEEEEEGQEGVEEEDEKD. Polar residues-rich tracts occupy residues 1661-1670, 1702-1716, 1733-1743, and 1829-1840; these read NKATMVSQPS, TPTS…AGSN, GNSQPKGTKGQ, and SGPNRAQGSWAT.

It belongs to the calcium channel alpha-1 subunit (TC 1.A.1.11) family. CACNA1F subfamily. As to quaternary structure, voltage-dependent calcium channels are multisubunit complexes, consisting of alpha-1, alpha-2, beta and delta subunits in a 1:1:1:1 ratio. The channel activity is directed by the pore-forming and voltage-sensitive alpha-1 subunit. In many cases, this subunit is sufficient to generate voltage-sensitive calcium channel activity. The auxiliary subunits beta and alpha-2/delta linked by a disulfide bridge regulate the channel activity. Interacts (via IQ domain) with CABP4; in a calcium independent manner. Interacts with CABP4; suppresses robust calcium-dependent inactivation of channel without enhancing the hyperpolarized voltage-dependent activation. As to expression, expression in skeletal muscle and retina. Isoform 4 is expressed in retina.

The protein resides in the membrane. The enzyme catalyses Ca(2+)(in) = Ca(2+)(out). Its function is as follows. Voltage-sensitive calcium channels (VSCC) mediate the entry of calcium ions into excitable cells and are also involved in a variety of calcium-dependent processes, including muscle contraction, hormone or neurotransmitter release, gene expression, cell motility, cell division and cell death. The isoform alpha-1F gives rise to L-type calcium currents. Long-lasting (L-type) calcium channels belong to the 'high-voltage activated' (HVA) group. They are blocked by dihydropyridines (DHP), phenylalkylamines, and by benzothiazepines. Activates at more negative voltages and does not undergo calcium-dependent inactivation (CDI), due to incoming calcium ions, during depolarization. Voltage-dependent L-type calcium channel activates at more hyperpolarized voltages and exhibits a robust calcium-dependent inactivation (CDI), due to incoming calcium ions, during depolarizations. Functionally, voltage-sensitive calcium channels (VSCC) mediate the entry of calcium ions into excitable cells and are also involved in a variety of calcium-dependent processes, including muscle contraction, hormone or neurotransmitter release, gene expression, cell motility, cell division and cell death. The chain is Voltage-dependent L-type calcium channel subunit alpha-1F from Homo sapiens (Human).